Consider the following 84-residue polypeptide: UPF0153 protein YeiW (84 aa).

This sequence belongs to the UPF0153 family.

This Escherichia coli (strain K12) protein is UPF0153 protein YeiW (yeiW).